Reading from the N-terminus, the 404-residue chain is Cysteine desulfurase IscS (404 aa).

Residues 75–76 (AT), N155, Q183, and 203–205 (SSH) each bind pyridoxal 5'-phosphate. An N6-(pyridoxal phosphate)lysine modification is found at K206. T243 is a pyridoxal 5'-phosphate binding site. C328 (cysteine persulfide intermediate) is an active-site residue. A [2Fe-2S] cluster-binding site is contributed by C328.

This sequence belongs to the class-V pyridoxal-phosphate-dependent aminotransferase family. NifS/IscS subfamily. In terms of assembly, homodimer. Forms a heterotetramer with IscU, interacts with other sulfur acceptors. Pyridoxal 5'-phosphate serves as cofactor.

The protein resides in the cytoplasm. The catalysed reaction is (sulfur carrier)-H + L-cysteine = (sulfur carrier)-SH + L-alanine. It participates in cofactor biosynthesis; iron-sulfur cluster biosynthesis. Master enzyme that delivers sulfur to a number of partners involved in Fe-S cluster assembly, tRNA modification or cofactor biosynthesis. Catalyzes the removal of elemental sulfur atoms from cysteine to produce alanine. Functions as a sulfur delivery protein for Fe-S cluster synthesis onto IscU, an Fe-S scaffold assembly protein, as well as other S acceptor proteins. The chain is Cysteine desulfurase IscS from Haemophilus influenzae (strain PittEE).